Consider the following 359-residue polypeptide: Phospho-N-acetylmuramoyl-pentapeptide-transferase (359 aa).

10 helical membrane-spanning segments follow: residues 3 to 23, 53 to 73, 84 to 104, 117 to 137, 156 to 176, 187 to 207, 231 to 251, 255 to 275, 283 to 303, and 330 to 350; these read QILF…PVLI, GGVA…LIGI, GLLV…DDFI, TAKL…ALQF, IATV…LVSA, LDGL…IITF, LALI…WNAA, IFMG…LSIT, VVIG…VAVF, and VIIR…ALFY.

The protein belongs to the glycosyltransferase 4 family. MraY subfamily. Mg(2+) is required as a cofactor.

The protein localises to the cell membrane. It carries out the reaction UDP-N-acetyl-alpha-D-muramoyl-L-alanyl-gamma-D-glutamyl-meso-2,6-diaminopimeloyl-D-alanyl-D-alanine + di-trans,octa-cis-undecaprenyl phosphate = di-trans,octa-cis-undecaprenyl diphospho-N-acetyl-alpha-D-muramoyl-L-alanyl-D-glutamyl-meso-2,6-diaminopimeloyl-D-alanyl-D-alanine + UMP. The protein operates within cell wall biogenesis; peptidoglycan biosynthesis. Functionally, catalyzes the initial step of the lipid cycle reactions in the biosynthesis of the cell wall peptidoglycan: transfers peptidoglycan precursor phospho-MurNAc-pentapeptide from UDP-MurNAc-pentapeptide onto the lipid carrier undecaprenyl phosphate, yielding undecaprenyl-pyrophosphoryl-MurNAc-pentapeptide, known as lipid I. This Rhodococcus opacus (strain B4) protein is Phospho-N-acetylmuramoyl-pentapeptide-transferase.